Consider the following 275-residue polypeptide: Diaminopimelate epimerase (275 aa).

Substrate-binding residues include Asn-12, Gln-45, and Asn-65. Catalysis depends on Cys-74, which acts as the Proton donor. Residues 75-76, Asn-158, Asn-191, and 209-210 each bind substrate; these read GN and ER. Cys-218 acts as the Proton acceptor in catalysis. 219–220 serves as a coordination point for substrate; the sequence is GT.

It belongs to the diaminopimelate epimerase family. As to quaternary structure, homodimer.

The protein localises to the cytoplasm. It carries out the reaction (2S,6S)-2,6-diaminopimelate = meso-2,6-diaminopimelate. It functions in the pathway amino-acid biosynthesis; L-lysine biosynthesis via DAP pathway; DL-2,6-diaminopimelate from LL-2,6-diaminopimelate: step 1/1. In terms of biological role, catalyzes the stereoinversion of LL-2,6-diaminopimelate (L,L-DAP) to meso-diaminopimelate (meso-DAP), a precursor of L-lysine and an essential component of the bacterial peptidoglycan. The polypeptide is Diaminopimelate epimerase (Shewanella baltica (strain OS223)).